Consider the following 508-residue polypeptide: GMP synthase [glutamine-hydrolyzing] (508 aa).

In terms of domain architecture, Glutamine amidotransferase type-1 spans 1 to 189 (MILVLDFGSQ…ALLVCGCEKT (189 aa)). Catalysis depends on C78, which acts as the Nucleophile. Catalysis depends on residues H163 and E165. A GMPS ATP-PPase domain is found at 190 to 383 (WGMQHFAQRE…LGVSQDFLMR (194 aa)). Position 217–223 (217–223 (SGGVDST)) interacts with ATP.

In terms of assembly, homodimer.

It catalyses the reaction XMP + L-glutamine + ATP + H2O = GMP + L-glutamate + AMP + diphosphate + 2 H(+). The protein operates within purine metabolism; GMP biosynthesis; GMP from XMP (L-Gln route): step 1/1. In terms of biological role, catalyzes the synthesis of GMP from XMP. The protein is GMP synthase [glutamine-hydrolyzing] of Helicobacter pylori (strain P12).